A 77-amino-acid chain; its full sequence is Acyl carrier protein (77 aa).

The Carrier domain occupies 1–76 (MSLEDDVKAI…DVIKYIQERQ (76 aa)). Ser36 is subject to O-(pantetheine 4'-phosphoryl)serine.

The protein belongs to the acyl carrier protein (ACP) family. In terms of processing, 4'-phosphopantetheine is transferred from CoA to a specific serine of apo-ACP by AcpS. This modification is essential for activity because fatty acids are bound in thioester linkage to the sulfhydryl of the prosthetic group.

The protein localises to the cytoplasm. It functions in the pathway lipid metabolism; fatty acid biosynthesis. Functionally, carrier of the growing fatty acid chain in fatty acid biosynthesis. This chain is Acyl carrier protein, found in Chlamydia muridarum (strain MoPn / Nigg).